We begin with the raw amino-acid sequence, 171 residues long: MMRTVQLRTLRPCIRAQQQPVRAPTSVAAATATTPAPTKKCPFSLFAKLGGREAVEAAVDKFYNKVVADPTVSVFFSKTDMKVQRSKQFAFLAYALGGAAEWKGKDMRTAHKDLVPHLTDVHFQAVVRHLSDTLAELGVTPGDIADAMAVVASTKTEVLNMPRQQGAESNR.

The transit peptide at 1-23 directs the protein to the chloroplast; sequence MMRTVQLRTLRPCIRAQQQPVRA. Residues Y63 and H111 each contribute to the heme site.

It belongs to the truncated hemoglobin family. Group I subfamily. The cofactor is heme.

Its subcellular location is the plastid. It is found in the chloroplast. The protein is Group 1 truncated hemoglobin LI410 (LI410) of Chlamydomonas moewusii (Chlamydomonas eugametos).